The chain runs to 605 residues: Sulfite reductase [NADPH] flavoprotein alpha-component (605 aa).

Residues 68–206 (VTVLYGSQTG…PAAEWLEGVL (139 aa)) enclose the Flavodoxin-like domain. FMN-binding positions include 74 to 78 (SQTGN), 121 to 126 (STHGEG), and 154 to 185 (VLAL…KRIS). The disordered stretch occupies residues 213 to 234 (GGGSAAPAPAAASQTGESSYSR). Residues 235–454 (TNPFRAEVLE…VQHNQNFKLP (220 aa)) enclose the FAD-binding FR-type domain. Residue 392 to 395 (RLYS) coordinates FAD. NADP(+)-binding positions include Asp495 and 525–533 (SRDTEEKVY).

Alpha(8)-beta(8). The alpha component is a flavoprotein, the beta component is a hemoprotein. FAD is required as a cofactor. It depends on FMN as a cofactor.

It carries out the reaction hydrogen sulfide + 3 NADP(+) + 3 H2O = sulfite + 3 NADPH + 4 H(+). It functions in the pathway sulfur metabolism; hydrogen sulfide biosynthesis; hydrogen sulfide from sulfite (NADPH route): step 1/1. Its function is as follows. Component of the sulfite reductase complex that catalyzes the 6-electron reduction of sulfite to sulfide. This is one of several activities required for the biosynthesis of L-cysteine from sulfate. The flavoprotein component catalyzes the electron flow from NADPH -&gt; FAD -&gt; FMN to the hemoprotein component. The polypeptide is Sulfite reductase [NADPH] flavoprotein alpha-component (cysJ) (Bacillus subtilis (strain 168)).